Consider the following 298-residue polypeptide: uncharacterized protein (298 aa).

This is an uncharacterized protein from Orgyia pseudotsugata multicapsid polyhedrosis virus (OpMNPV).